Here is a 487-residue protein sequence, read N- to C-terminus: UPF0324 membrane protein NE0724 (487 aa).

The next 11 helical transmembrane spans lie at 19-38 (WAVW…LWGW), 71-93 (PALS…AWSM), 100-119 (FFIG…IIGN), 139-161 (LSLG…GNFF), 181-200 (AIVF…AGFI), 204-226 (VMTG…YALG), 269-291 (VSIL…YTAI), 350-369 (IWID…VWVY), 389-411 (FPKF…SSGS), 426-443 (GPMR…IGII), and 456-478 (ALLY…AWIF).

It belongs to the UPF0324 family.

The protein localises to the cell membrane. This Nitrosomonas europaea (strain ATCC 19718 / CIP 103999 / KCTC 2705 / NBRC 14298) protein is UPF0324 membrane protein NE0724.